A 306-amino-acid chain; its full sequence is Ornithine carbamoyltransferase (306 aa).

Carbamoyl phosphate contacts are provided by residues Ser54–Thr57, Gln81, Arg105, and His132–Gln135. Residues Asn162, Asp226, and Ser230–Met231 each bind L-ornithine. Residues Cys266–Leu267 and Arg294 contribute to the carbamoyl phosphate site.

This sequence belongs to the aspartate/ornithine carbamoyltransferase superfamily. OTCase family.

It localises to the cytoplasm. It carries out the reaction carbamoyl phosphate + L-ornithine = L-citrulline + phosphate + H(+). It participates in amino-acid biosynthesis; L-arginine biosynthesis; L-arginine from L-ornithine and carbamoyl phosphate: step 1/3. In terms of biological role, reversibly catalyzes the transfer of the carbamoyl group from carbamoyl phosphate (CP) to the N(epsilon) atom of ornithine (ORN) to produce L-citrulline. The chain is Ornithine carbamoyltransferase from Sulfolobus acidocaldarius (strain ATCC 33909 / DSM 639 / JCM 8929 / NBRC 15157 / NCIMB 11770).